The primary structure comprises 442 residues: Citrate synthase (442 aa).

Catalysis depends on residues His274, His320, and Asp375.

This sequence belongs to the citrate synthase family.

The catalysed reaction is oxaloacetate + acetyl-CoA + H2O = citrate + CoA + H(+). It participates in carbohydrate metabolism; tricarboxylic acid cycle; isocitrate from oxaloacetate: step 1/2. Its function is as follows. Catalyzes both citrate generation and citrate cleavage. Part of a reversible tricarboxylic acid (TCA) cycle that can fix carbon dioxide autotrophically and may represent an ancestral mode of the conventional reductive TCA (rTCA) cycle. The direction is controlled by the available carbon source(s). The polypeptide is Citrate synthase (Thermosulfidibacter takaii (strain DSM 17441 / JCM 13301 / NBRC 103674 / ABI70S6)).